A 201-amino-acid polypeptide reads, in one-letter code: Ribonuclease HII (201 aa).

The RNase H type-2 domain occupies 15-201 (AIIAGVDEAG…FAPIKAYGAP (187 aa)). Asp21, Glu22, and Asp113 together coordinate a divalent metal cation.

Belongs to the RNase HII family. Requires Mn(2+) as cofactor. Mg(2+) serves as cofactor.

The protein localises to the cytoplasm. The enzyme catalyses Endonucleolytic cleavage to 5'-phosphomonoester.. Its function is as follows. Endonuclease that specifically degrades the RNA of RNA-DNA hybrids. The chain is Ribonuclease HII from Bordetella pertussis (strain Tohama I / ATCC BAA-589 / NCTC 13251).